The primary structure comprises 788 residues: Ribonucleoside-diphosphate reductase subunit alpha (788 aa).

An ATP-cone domain is found at 2–92 (ITVVKRNGRI…LYDLYHKVSG (91 aa)). Residues K6, 12-18 (EPLDITK), and T52 each bind ATP. Residue T200 coordinates GDP. C216 and C497 form a disulfide bridge. Residues 223 to 225 (DNI) and R253 contribute to the dTTP site. Residue N424 coordinates GDP. Residue N424 is the Proton acceptor of the active site. The active-site Cysteine radical intermediate is the C426. GDP contacts are provided by residues E428 and 661–663 (SSI). The Proton acceptor role is filled by E428.

This sequence belongs to the ribonucleoside diphosphate reductase large chain family. As to quaternary structure, tetramer of two alpha and two beta subunits.

It carries out the reaction a 2'-deoxyribonucleoside 5'-diphosphate + [thioredoxin]-disulfide + H2O = a ribonucleoside 5'-diphosphate + [thioredoxin]-dithiol. Under complex allosteric control mediated by deoxynucleoside triphosphates and ATP binding to separate specificity and activation sites on the alpha subunit. The type of nucleotide bound at the specificity site determines substrate preference. It seems probable that ATP makes the enzyme reduce CDP and UDP, dGTP favors ADP reduction and dTTP favors GDP reduction. Stimulated by ATP and inhibited by dATP binding to the activity site. Functionally, provides the precursors necessary for DNA synthesis. Catalyzes the biosynthesis of deoxyribonucleotides from the corresponding ribonucleotides. This chain is Ribonucleoside-diphosphate reductase subunit alpha (nrdA), found in Helicobacter pylori (strain J99 / ATCC 700824) (Campylobacter pylori J99).